Here is a 452-residue protein sequence, read N- to C-terminus: Gamma-aminobutyric acid receptor subunit delta (452 aa).

The first 24 residues, 1–24 (MDAPARLLAPLLLLCAQQLRGTRA), serve as a signal peptide directing secretion. The Extracellular portion of the chain corresponds to 25–251 (MNDIGDYVGS…HLRRNRGVYI (227 aa)). N-linked (GlcNAc...) asparagine glycosylation is found at asparagine 103 and asparagine 106. A disulfide bond links cysteine 164 and cysteine 178. The chain crosses the membrane as a helical span at residues 252-271 (IQSYMPSVLLVAMSWVSFWI). Residues 272 to 275 (SQAA) lie on the Cytoplasmic side of the membrane. A helical membrane pass occupies residues 276–298 (VPARVSLGITTVLTMTTLMVSAR). At 299-308 (SSLPRASAIK) the chain is on the extracellular side. The helical transmembrane segment at 309-331 (ALDVYFWICYVFVFAALVEYAFA) threads the bilayer. Topologically, residues 332-426 (HFNADYRKKQ…ARLRPIDADT (95 aa)) are cytoplasmic. The residue at position 390 (serine 390) is a Phosphoserine. Residues 427–449 (IDIYARAVFPAAFAAVNVIYWAA) traverse the membrane as a helical segment. Residues 450–452 (YAM) lie on the Extracellular side of the membrane.

It belongs to the ligand-gated ion channel (TC 1.A.9) family. Gamma-aminobutyric acid receptor (TC 1.A.9.5) subfamily. GABRD sub-subfamily. As to quaternary structure, heteropentamer, formed by a combination of alpha (GABRA1-6), beta (GABRB1-3), gamma (GABRG1-3), delta (GABRD), epsilon (GABRE), rho (GABRR1-3), pi (GABRP) and theta (GABRQ) chains, each subunit exhibiting distinct physiological and pharmacological properties.

The protein localises to the cell membrane. The catalysed reaction is chloride(in) = chloride(out). Delta subunit of the heteropentameric ligand-gated chloride channel gated by gamma-aminobutyric acid (GABA), a major inhibitory neurotransmitter in the brain. GABA-gated chloride channels, also named GABA(A) receptors (GABAAR), consist of five subunits arranged around a central pore and contain GABA active binding site(s) located at the alpha and beta subunit interface(s). When activated by GABA, GABAARs selectively allow the flow of chloride anions across the cell membrane down their electrochemical gradient. GABAARs containing delta/GABRD subunits are predominantly located in extrasynaptic or perisynaptic positions on hippocampus and cerebellar granule cells, and contribute to the tonic GABAergic inhibition. GABAAR containing alpha-4-beta-3-delta subunits can simultaneously bind GABA and histamine where histamine binds at the interface of two neighboring beta subunits, which may be involved in the regulation of sleep and wakefulness. The polypeptide is Gamma-aminobutyric acid receptor subunit delta (Homo sapiens (Human)).